The following is a 130-amino-acid chain: L-ectoine synthase (130 aa).

This sequence belongs to the ectoine synthase family.

The catalysed reaction is (2S)-4-acetamido-2-aminobutanoate = L-ectoine + H2O. The protein operates within amine and polyamine biosynthesis; ectoine biosynthesis; L-ectoine from L-aspartate 4-semialdehyde: step 3/3. Functionally, catalyzes the circularization of gamma-N-acetyl-alpha,gamma-diaminobutyric acid (ADABA) to ectoine (1,4,5,6-tetrahydro-2-methyl-4-pyrimidine carboxylic acid), which is an excellent osmoprotectant. This is L-ectoine synthase from Mycolicibacterium vanbaalenii (strain DSM 7251 / JCM 13017 / BCRC 16820 / KCTC 9966 / NRRL B-24157 / PYR-1) (Mycobacterium vanbaalenii).